We begin with the raw amino-acid sequence, 207 residues long: Ribosomal RNA large subunit methyltransferase E (207 aa).

The interval 1–20 is disordered; it reads MKRDPTKGRKTPDHYARKAK. Residues Gly56, Trp58, Asp76, Asp94, and Asp116 each contribute to the S-adenosyl-L-methionine site. Residue Lys156 is the Proton acceptor of the active site.

Belongs to the class I-like SAM-binding methyltransferase superfamily. RNA methyltransferase RlmE family.

It is found in the cytoplasm. The enzyme catalyses uridine(2552) in 23S rRNA + S-adenosyl-L-methionine = 2'-O-methyluridine(2552) in 23S rRNA + S-adenosyl-L-homocysteine + H(+). Functionally, specifically methylates the uridine in position 2552 of 23S rRNA at the 2'-O position of the ribose in the fully assembled 50S ribosomal subunit. This chain is Ribosomal RNA large subunit methyltransferase E, found in Desulfosudis oleivorans (strain DSM 6200 / JCM 39069 / Hxd3) (Desulfococcus oleovorans).